The sequence spans 376 residues: Meiotically up-regulated gene 183 protein (376 aa).

Residues 334–376 are disordered; sequence SLENVDDMDDIDVKEPLFSDNDEDVENSDSEDGSESIGSEDEE. The span at 353–376 shows a compositional bias: acidic residues; it reads DNDEDVENSDSEDGSESIGSEDEE.

It belongs to the RTT106 family.

Has a role in meiosis. This Schizosaccharomyces pombe (strain 972 / ATCC 24843) (Fission yeast) protein is Meiotically up-regulated gene 183 protein (mug183).